The chain runs to 318 residues: NADH-ubiquinone oxidoreductase chain 1 (318 aa).

8 helical membrane-spanning segments follow: residues phenylalanine 2–leucine 22, methionine 70–proline 90, leucine 100–glycine 120, alanine 147–isoleucine 167, methionine 172–glutamate 192, leucine 222–phenylalanine 242, glutamate 253–isoleucine 273, and leucine 294–isoleucine 314.

This sequence belongs to the complex I subunit 1 family. In terms of assembly, core subunit of respiratory chain NADH dehydrogenase (Complex I) which is composed of 45 different subunits.

It localises to the mitochondrion inner membrane. The enzyme catalyses a ubiquinone + NADH + 5 H(+)(in) = a ubiquinol + NAD(+) + 4 H(+)(out). Core subunit of the mitochondrial membrane respiratory chain NADH dehydrogenase (Complex I) which catalyzes electron transfer from NADH through the respiratory chain, using ubiquinone as an electron acceptor. Essential for the catalytic activity and assembly of complex I. This Bos indicus (Zebu) protein is NADH-ubiquinone oxidoreductase chain 1 (MT-ND1).